The following is a 265-amino-acid chain: Phosphonates import ATP-binding protein PhnC (265 aa).

An ABC transporter domain is found at 3–247; the sequence is LRLKQAFLHH…MLDTLYANEQ (245 aa). Position 36 to 43 (36 to 43) interacts with ATP; it reads GPSGAGKS.

Belongs to the ABC transporter superfamily. Phosphonates importer (TC 3.A.1.9.1) family. As to quaternary structure, the complex is composed of two ATP-binding proteins (PhnC), two transmembrane proteins (PhnE) and a solute-binding protein (PhnD).

Its subcellular location is the cell inner membrane. It carries out the reaction phosphonate(out) + ATP + H2O = phosphonate(in) + ADP + phosphate + H(+). Functionally, part of the ABC transporter complex PhnCDE involved in phosphonates import. Responsible for energy coupling to the transport system. In Pseudomonas fluorescens (strain Pf0-1), this protein is Phosphonates import ATP-binding protein PhnC.